The primary structure comprises 329 residues: BTB/POZ domain-containing adapter for CUL3-mediated RhoA degradation protein 1 (329 aa).

The tract at residues 1–31 (MSAEASGPAPAAAECLESPSPSSVEPGSPSY) is disordered. A BTB domain is found at 41-109 (KYVKLNVGGS…LRDGSVPLPE (69 aa)).

It belongs to the BACURD family. Homotetramer; forms a two-fold symmetric tetramer in solution. Interacts with CUL3; interaction is direct and forms a 5:5 heterodecamer. Component of the BCR(KCTD13) E3 ubiquitin ligase complex, at least composed of CUL3, KCTD13/BACURD1 and RBX1. Interacts with RHOA; with a preference for RhoA-GDP. Interacts with POLD2 and PCNA. Interacts with SPRTN.

Its subcellular location is the nucleus. It participates in protein modification; protein ubiquitination. Its function is as follows. Substrate-specific adapter of a BCR (BTB-CUL3-RBX1) E3 ubiquitin-protein ligase complex required for synaptic transmission. The BCR(KCTD13) E3 ubiquitin ligase complex mediates the ubiquitination of RHOA, leading to its degradation by the proteasome, thereby regulating the actin cytoskeleton and promoting synaptic transmission. In Mus musculus (Mouse), this protein is BTB/POZ domain-containing adapter for CUL3-mediated RhoA degradation protein 1 (Kctd13).